The following is a 271-amino-acid chain: Phosphatidylglycerol--prolipoprotein diacylglyceryl transferase (271 aa).

Transmembrane regions (helical) follow at residues 25–45 (WYGI…KFFV), 60–80 (YFIW…ILIY), 103–123 (FVGI…IATL), and 131–151 (ANPW…YVFG). Position 152 (Arg-152) interacts with a 1,2-diacyl-sn-glycero-3-phospho-(1'-sn-glycerol). Transmembrane regions (helical) follow at residues 181–201 (PSQL…VYLA), 209–229 (GELI…CEFY), and 235–255 (GIGF…IMFI).

Belongs to the Lgt family.

Its subcellular location is the cell inner membrane. The catalysed reaction is L-cysteinyl-[prolipoprotein] + a 1,2-diacyl-sn-glycero-3-phospho-(1'-sn-glycerol) = an S-1,2-diacyl-sn-glyceryl-L-cysteinyl-[prolipoprotein] + sn-glycerol 1-phosphate + H(+). It functions in the pathway protein modification; lipoprotein biosynthesis (diacylglyceryl transfer). Its function is as follows. Catalyzes the transfer of the diacylglyceryl group from phosphatidylglycerol to the sulfhydryl group of the N-terminal cysteine of a prolipoprotein, the first step in the formation of mature lipoproteins. The protein is Phosphatidylglycerol--prolipoprotein diacylglyceryl transferase of Campylobacter jejuni (strain RM1221).